Here is a 449-residue protein sequence, read N- to C-terminus: Sensor protein QseC (449 aa).

Topologically, residues 1 to 12 (MKLTQRLSLRVR) are cytoplasmic. The helical transmembrane segment at 13-33 (LTLIFLILVSITWAISSFVAW) threads the bilayer. Over 34 to 161 (RKTTDNVDEL…REDMALAIVA (128 aa)) the chain is Periplasmic. A helical membrane pass occupies residues 162 to 182 (AQLTPWLIALPFMLLILLLLL). The HAMP domain occupies 183–235 (HRELRPLKKLAQALRFRSPESETPLDAKGVPSEVRPLVEALNQLFSRIHSMMV). The Cytoplasmic portion of the chain corresponds to 183-449 (HRELRPLKKL…EGGFEAVVSW (267 aa)). The region spanning 243 to 449 (DAAHELRSPL…EGGFEAVVSW (207 aa)) is the Histidine kinase domain. At His246 the chain carries Phosphohistidine; by autocatalysis.

It localises to the cell inner membrane. The enzyme catalyses ATP + protein L-histidine = ADP + protein N-phospho-L-histidine.. Member of a two-component regulatory system QseB/QseC. Activates the flagella regulon by activating transcription of FlhDC. May activate QseB by phosphorylation. The polypeptide is Sensor protein QseC (qseC) (Salmonella typhimurium (strain LT2 / SGSC1412 / ATCC 700720)).